A 188-amino-acid chain; its full sequence is Acireductone dioxygenase (188 aa).

The disordered stretch occupies residues methionine 1–arginine 20. 4 residues coordinate Fe(2+): histidine 97, histidine 99, glutamate 103, and histidine 141. Ni(2+) is bound by residues histidine 97, histidine 99, glutamate 103, and histidine 141.

This sequence belongs to the acireductone dioxygenase (ARD) family. Monomer. Fe(2+) is required as a cofactor. It depends on Ni(2+) as a cofactor.

The catalysed reaction is 1,2-dihydroxy-5-(methylsulfanyl)pent-1-en-3-one + O2 = 3-(methylsulfanyl)propanoate + CO + formate + 2 H(+). It catalyses the reaction 1,2-dihydroxy-5-(methylsulfanyl)pent-1-en-3-one + O2 = 4-methylsulfanyl-2-oxobutanoate + formate + 2 H(+). The protein operates within amino-acid biosynthesis; L-methionine biosynthesis via salvage pathway; L-methionine from S-methyl-5-thio-alpha-D-ribose 1-phosphate: step 5/6. Functionally, catalyzes 2 different reactions between oxygen and the acireductone 1,2-dihydroxy-3-keto-5-methylthiopentene (DHK-MTPene) depending upon the metal bound in the active site. Fe-containing acireductone dioxygenase (Fe-ARD) produces formate and 2-keto-4-methylthiobutyrate (KMTB), the alpha-ketoacid precursor of methionine in the methionine recycle pathway. Ni-containing acireductone dioxygenase (Ni-ARD) produces methylthiopropionate, carbon monoxide and formate, and does not lie on the methionine recycle pathway. This Xanthomonas campestris pv. campestris (strain 8004) protein is Acireductone dioxygenase.